Reading from the N-terminus, the 458-residue chain is GTPase Der (458 aa).

2 consecutive EngA-type G domains span residues 3–167 and 176–351; these read PVVV…PETE and IKLA…AQYT. GTP-binding positions include 9–16, 56–60, 119–122, 182–189, 229–233, and 294–297; these read GRPNVGKS, DTGGF, NKID, DTAGL, and NKWD. The region spanning 352–436 is the KH-like domain; it reads FNIKTGELNN…PIRLFFREKP (85 aa).

The protein belongs to the TRAFAC class TrmE-Era-EngA-EngB-Septin-like GTPase superfamily. EngA (Der) GTPase family. In terms of assembly, associates with the 50S ribosomal subunit.

In terms of biological role, GTPase that plays an essential role in the late steps of ribosome biogenesis. The sequence is that of GTPase Der from Desulfosudis oleivorans (strain DSM 6200 / JCM 39069 / Hxd3) (Desulfococcus oleovorans).